Reading from the N-terminus, the 53-residue chain is Large ribosomal subunit protein eL40 (53 aa).

This sequence belongs to the eukaryotic ribosomal protein eL40 family.

The protein is Large ribosomal subunit protein eL40 of Pyrobaculum calidifontis (strain DSM 21063 / JCM 11548 / VA1).